The chain runs to 143 residues: Putative complexin-1 (143 aa).

The segment at 15–71 (NEVTGGLGLKDDGGEKTETGEDPEVVAARLEQEERRKEKHRKMEQEREKMRQGIRDK) is disordered. Basic and acidic residues-rich tracts occupy residues 23 to 33 (LKDDGGEKTET) and 44 to 71 (LEQE…IRDK). Positions 40-71 (VAARLEQEERRKEKHRKMEQEREKMRQGIRDK) form a coiled coil.

This sequence belongs to the complexin/synaphin family.

It localises to the cytoplasm. It is found in the cytosol. Its function is as follows. Positively regulates a late step in synaptic vesicle exocytosis. In Caenorhabditis briggsae, this protein is Putative complexin-1 (cpx-1).